A 1025-amino-acid chain; its full sequence is MKFFALFIYRPVATILLSVAITLCGILGFRMLPVAPLPQVDFPVIIVSASLPGASPETMASSVATPLERSLGRIAGVSEMTSSSSLGSTRIILQFDFDRDINGAARDVQAAINAAQSLLPSGMPSRPTYRKANPSDAPIMILTLTSDTYSQGELYDFASTQLAPTISQIDGVGDVDVGGSSLPAVRVGLNPQALFNQGVSLDDVRTAVSNANVRKPQGALEDGTHRWQIQTNDELKTAAEYQPLIIHYNNGGAVRLGDVATVTDSVQDVRNAGMTNAKPAILLMIRKLPEANIIQTVDSIRAKLPELQETIPAAIDLQIAQDRSPTIRASLEEVEQTLIISVALVILVVFLFLRSGRATIIPAVSVPVSLIGTFAAMYLCGFSLNNLSLMALTIATGFVVDDAIVVLENIARHLEAGMKPLQAALQGTREVGFTVLSMSLSLVAVFLPLLLMGGLPGRLLREFAVTLSVAIGISLLVSLTLTPMMCGWMLKASKPREQKRLRGFGRMLVALQQGYGKSLKWVLNHTRLVGVVLLGTIALNIWLYISIPKTFFPEQDTGVLMGGIQADQSISFQAMRGKLQDFMKIIRDDPAVDNVTGFTGGSRVNSGMMFITLKPRDERSETAQQIIDRLRVKLAKEPGANLFLMAVQDIRVGGRQSNASYQYTLLSDDLAALREWEPKIRKKLATLPELADVNSDQQDNGAEMNLVYDRDTMARLGIDVQAANSLLNNAFGQRQISTIYQPMNQYKVVMEVDPRYTQDISALEKMFVINNEGKAIPLSYFAKWQPANAPLSVNHQGLSAASTISFNLPTGKSLSDASAAIDRAMTQLGVPSTVRGSFAGTAQVFQETMNSQVILIIAAIATVYIVLGILYESYVHPLTILSTLPSAGVGALLALELFNAPFSLIALIGIMLLIGIVKKNAIMMVDFALEAQRHGNLTPQEAIFQACLLRFRPIMMTTLAALFGALPLVLSGGDGSELRQPLGITIVGGLVMSQLLTLYTTPVVYLFFDRLRLRFSRKPKQTVTE.

The next 12 helical transmembrane spans lie at 3 to 23, 333 to 353, 360 to 380, 387 to 407, 431 to 451, 463 to 483, 528 to 548, 853 to 873, 875 to 895, 897 to 917, 953 to 973, and 984 to 1004; these read FFALFIYRPVATILLSVAITL, EVEQTLIISVALVILVVFLFL, IIPAVSVPVSLIGTFAAMYLC, LSLMALTIATGFVVDDAIVVL, VGFTVLSMSLSLVAVFLPLLL, FAVTLSVAIGISLLVSLTLTP, LVGVVLLGTIALNIWLYISIP, VILIIAAIATVYIVLGILYES, VHPLTILSTLPSAGVGALLAL, LFNAPFSLIALIGIMLLIGIV, PIMMTTLAALFGALPLVLSGG, and ITIVGGLVMSQLLTLYTTPVV.

Belongs to the resistance-nodulation-cell division (RND) (TC 2.A.6) family. MdtC subfamily. In terms of assembly, part of a tripartite efflux system composed of MdtA, MdtB and MdtC. MdtC forms a heteromultimer with MdtB.

Its subcellular location is the cell inner membrane. The MdtABC tripartite complex confers resistance against novobiocin and deoxycholate. In Escherichia coli (strain K12 / MC4100 / BW2952), this protein is Multidrug resistance protein MdtC.